A 159-amino-acid polypeptide reads, in one-letter code: Ribosomal RNA large subunit methyltransferase H (159 aa).

S-adenosyl-L-methionine is bound by residues L76, G108, and 127–132; that span reads FGLLTF.

It belongs to the RNA methyltransferase RlmH family. As to quaternary structure, homodimer.

The protein localises to the cytoplasm. It catalyses the reaction pseudouridine(1915) in 23S rRNA + S-adenosyl-L-methionine = N(3)-methylpseudouridine(1915) in 23S rRNA + S-adenosyl-L-homocysteine + H(+). Specifically methylates the pseudouridine at position 1915 (m3Psi1915) in 23S rRNA. This Streptococcus thermophilus (strain ATCC BAA-491 / LMD-9) protein is Ribosomal RNA large subunit methyltransferase H.